The chain runs to 297 residues: MPELPEVETVRRGLEPVMEGARIIHVEQRRADLRFPFPAGFSEHVKGCRIEALGRRAKYLLLHLENGRVLVSHLGMSGSFRIEESGSDKLRGDFHYARSKAEKHDHVVFHLARHEGGSARVIYNDPRRFGFMLLLDSADLEAHPLFAGLGVEPTGNALDGALLARLLAGKRAPLKAALMDQRLVAGLGNIYVCEALWRAGLSPRRIAATIATREGKSTGRSERLAGAIRTVIAEAIAAGGSSLKDYVQADGSLGYFQHSFSVYDREGKPCRKEGCSGTIQRFVQGGRSTFYCPICQR.

The active-site Schiff-base intermediate with DNA is the proline 2. The Proton donor role is filled by glutamate 3. Lysine 58 serves as the catalytic Proton donor; for beta-elimination activity. 3 residues coordinate DNA: histidine 104, arginine 127, and lysine 170. The FPG-type zinc-finger motif lies at 261 to 297 (SVYDREGKPCRKEGCSGTIQRFVQGGRSTFYCPICQR). Residue arginine 287 is the Proton donor; for delta-elimination activity of the active site.

This sequence belongs to the FPG family. In terms of assembly, monomer. Zn(2+) is required as a cofactor.

It carries out the reaction Hydrolysis of DNA containing ring-opened 7-methylguanine residues, releasing 2,6-diamino-4-hydroxy-5-(N-methyl)formamidopyrimidine.. The catalysed reaction is 2'-deoxyribonucleotide-(2'-deoxyribose 5'-phosphate)-2'-deoxyribonucleotide-DNA = a 3'-end 2'-deoxyribonucleotide-(2,3-dehydro-2,3-deoxyribose 5'-phosphate)-DNA + a 5'-end 5'-phospho-2'-deoxyribonucleoside-DNA + H(+). In terms of biological role, involved in base excision repair of DNA damaged by oxidation or by mutagenic agents. Acts as a DNA glycosylase that recognizes and removes damaged bases. Has a preference for oxidized purines, such as 7,8-dihydro-8-oxoguanine (8-oxoG). Has AP (apurinic/apyrimidinic) lyase activity and introduces nicks in the DNA strand. Cleaves the DNA backbone by beta-delta elimination to generate a single-strand break at the site of the removed base with both 3'- and 5'-phosphates. This is Formamidopyrimidine-DNA glycosylase from Chelativorans sp. (strain BNC1).